An 866-amino-acid chain; its full sequence is Protein translocase subunit SecA (866 aa).

ATP contacts are provided by residues Gln87, 105 to 109 (GEGKT), and Asp514. The disordered stretch occupies residues 819–858 (VSPIGTPSSEGGGETSGADTYSNKKIGRNDPCPCGSGKKY). The Zn(2+) site is built by Cys850, Cys852, Cys861, and Cys862.

It belongs to the SecA family. In terms of assembly, monomer and homodimer. Part of the essential Sec protein translocation apparatus which comprises SecA, SecYEG and auxiliary proteins SecDF. Other proteins may also be involved. The cofactor is Zn(2+).

The protein localises to the cell inner membrane. It is found in the cytoplasm. The catalysed reaction is ATP + H2O + cellular proteinSide 1 = ADP + phosphate + cellular proteinSide 2.. In terms of biological role, part of the Sec protein translocase complex. Interacts with the SecYEG preprotein conducting channel. Has a central role in coupling the hydrolysis of ATP to the transfer of proteins into and across the cell membrane, serving as an ATP-driven molecular motor driving the stepwise translocation of polypeptide chains across the membrane. The sequence is that of Protein translocase subunit SecA from Elusimicrobium minutum (strain Pei191).